The chain runs to 245 residues: Demethylmenaquinone methyltransferase (245 aa).

Residues Thr-62, Asp-80, 105 to 106 (DA), and Ser-122 contribute to the S-adenosyl-L-methionine site.

The protein belongs to the class I-like SAM-binding methyltransferase superfamily. MenG/UbiE family.

The catalysed reaction is a 2-demethylmenaquinol + S-adenosyl-L-methionine = a menaquinol + S-adenosyl-L-homocysteine + H(+). The protein operates within quinol/quinone metabolism; menaquinone biosynthesis; menaquinol from 1,4-dihydroxy-2-naphthoate: step 2/2. In terms of biological role, methyltransferase required for the conversion of demethylmenaquinol (DMKH2) to menaquinol (MKH2). This is Demethylmenaquinone methyltransferase from Clavibacter sepedonicus (Clavibacter michiganensis subsp. sepedonicus).